The following is a 177-amino-acid chain: Ferritin heavy chain, oocyte isoform (177 aa).

Residues 7–156 form the Ferritin-like diiron domain; that stretch reads QNFHQECEAA…DHITNLRRMG (150 aa). Fe cation-binding residues include Glu24, Glu59, His62, Glu104, and Gln138.

Belongs to the ferritin family. In terms of assembly, oligomer of 24 subunits. There are two types of subunits: L (light) chain and H (heavy) chain. The functional molecule is roughly spherical and contains a central cavity into which the insoluble mineral iron core is deposited.

It is found in the cytoplasm. It carries out the reaction 4 Fe(2+) + O2 + 4 H(+) = 4 Fe(3+) + 2 H2O. In terms of biological role, stores iron in a soluble, non-toxic, readily available form. Important for iron homeostasis. Has ferroxidase activity. Iron is taken up in the ferrous form and deposited as ferric hydroxides after oxidation. The polypeptide is Ferritin heavy chain, oocyte isoform (Xenopus laevis (African clawed frog)).